Reading from the N-terminus, the 479-residue chain is Hydrogenase-4 component D (479 aa).

15 helical membrane-spanning segments follow: residues 3 to 23 (NLALTTLLLPFIGALVVSFSP), 30 to 50 (WGVLFAALTTLCMLSLISAFY), 55 to 75 (VAVTLTLVNVGDVALFGLVID), 80 to 100 (LILFVVVFLGLLVTIYSTGYL), 117 to 137 (AFLLVFIGAMAGLVLSSTLLG), 168 to 188 (ALLITHIGSLGLYLAAATLFL), 208 to 228 (LVYGGILFAAWGKSAQLPMQA), 238 to 258 (TPISAYLHAASMVKVGVYIFA), 270 to 290 (VIGGVGMVMALVTILYGFLMY), 300 to 320 (LAWSTITQLGWMFFGLSLSIF), 330 to 350 (IAYIVNHAFAKSLFFLVAGAL), 369 to 389 (LPLPGVGFCVAALAITGVPPF), 390 to 410 (NGFFSKFPLFAAGFALSVEYW), 411 to 431 (ILLPAMILLMIESVASFAWFI), and 458 to 478 (LVLIVLIVMSLISSVIAATWL).

It belongs to the complex I subunit 5 family.

It is found in the cell inner membrane. Its function is as follows. Possible component of hydrogenase 4. The polypeptide is Hydrogenase-4 component D (Escherichia coli (strain K12)).